The chain runs to 78 residues: MAKFKIKKGDMVQVIAGDDKGKKAKVLQVLPKQAQVIVEGCKVVKKAIKVSEKNPKGGFVSKEMPMSISNVKKAEGDN.

Belongs to the universal ribosomal protein uL24 family. In terms of assembly, part of the 50S ribosomal subunit.

One of two assembly initiator proteins, it binds directly to the 5'-end of the 23S rRNA, where it nucleates assembly of the 50S subunit. In terms of biological role, one of the proteins that surrounds the polypeptide exit tunnel on the outside of the subunit. The polypeptide is Large ribosomal subunit protein uL24 (Helicobacter hepaticus (strain ATCC 51449 / 3B1)).